The following is a 358-amino-acid chain: tRNA pseudouridine synthase B (358 aa).

The tract at residues 1–50 is disordered; that stretch reads MTTPDAAIDSKISDSNGADKNKSAADDNAFNAPGRKRHHNNQPRRDKRDV. Residue Asp-87 is the Nucleophile of the active site.

Belongs to the pseudouridine synthase TruB family. Type 1 subfamily.

It catalyses the reaction uridine(55) in tRNA = pseudouridine(55) in tRNA. Functionally, responsible for synthesis of pseudouridine from uracil-55 in the psi GC loop of transfer RNAs. This is tRNA pseudouridine synthase B from Nitrobacter winogradskyi (strain ATCC 25391 / DSM 10237 / CIP 104748 / NCIMB 11846 / Nb-255).